The sequence spans 980 residues: MTSPQLEWTLQTLLEQLNEDELKSFKSLLWAFPLEDVLQKTPWSEVEEADGKKLAEILVNTSSENWIRNATVNILEEMNLTELCKMAKAEMMEDGQVQEIDNPELGDAEEDSELAKPGEKEGWRNSMEKQSLVWKNTFWQGDIDNFHDDVTLRNQRFIPFLNPRTPRKLTPYTVVLHGPAGVGKTTLAKKCMLDWTDCNLSPTLRYAFYLSCKELSRMGPCSFAELISKDWPELQDDIPSILAQAQRILFVVDGLDELKVPPGALIQDICGDWEKKKPVPVLLGSLLKRKMLPRAALLVTTRPRALRDLQLLAQQPIYVRVEGFLEEDRRAYFLRHFGDEDQAMRAFELMRSNAALFQLGSAPAVCWIVCTTLKLQMEKGEDPVPTCLTRTGLFLRFLCSRFPQGAQLRGALRTLSLLAAQGLWAQMSVFHREDLERLGVQESDLRLFLDGDILRQDRVSKGCYSFIHLSFQQFLTALFYALEKEEGEDRDGHAWDIGDVQKLLSGEERLKNPDLIQVGHFLFGLANEKRAKELEATFGCRMSPDIKQELLQCKAHLHANKPLSVTDLKEVLGCLYESQEEELAKVVVAPFKEISIHLTNTSEVMHCSFSLKHCQDLQKLSLQVAKGVFLENYMDFELDIEFERCTYLTIPNWARQDLRSLRLWTDFCSLFSSNSNLKFLEVKQSFLSDSSVRILCDHVTRSTCHLQKVEIKNVTPDTAYRDFCLAFIGKKTLTHLTLAGHIEWERTMMLMLCDLLRNHKCNLQYLRLGGHCATPEQWAEFFYVLKANQSLKHLRLSANVLLDEGAMLLYKTMTRPKHFLQMLSLENCRLTEASCKDLAAVLVVSKKLTHLCLAKNPIGDTGVKFLCEGLSYPDCKLQTLVLQQCSITKLGCRYLSEALQEACSLTNLDLSINQIARGLWILCQALENPNCNLKHLRLKTYETNLEIKKLLEEVKEKNPKLTIDCNASGATAPPCCDFFC.

The region spanning 1–93 is the Pyrin domain; the sequence is MTSPQLEWTL…CKMAKAEMME (93 aa). Positions 104 to 123 are disordered; that stretch reads ELGDAEEDSELAKPGEKEGW. Basic and acidic residues predominate over residues 113–123; the sequence is ELAKPGEKEGW. In terms of domain architecture, NACHT spans 172-491; sequence YTVVLHGPAG…LEKEEGEDRD (320 aa). ATP is bound at residue 178–185; it reads GPAGVGKT. LRR repeat units follow at residues 614–638, 674–697, 760–784, 788–810, 817–840, 845–868, 874–897, 902–928, and 933–957; these read CQDL…DFEL, NSNL…ILCD, KCNL…FFYV, NQSL…MLLY, KHFL…DLAA, SKKL…FLCE, DCKL…YLSE, ACSL…ALEN, and LKHL…VKEK.

The protein belongs to the NLRP family. In terms of assembly, directly interacts with CASP1 and IL1B. In terms of tissue distribution, expressed in numerous tissues including uterus and ovary, with low levels in heart and brain. Not detected in skeletal muscle.

Functionally, inhibits CASP1/caspase-1-dependent IL1B secretion. The polypeptide is NACHT, LRR and PYD domains-containing protein 7 (NLRP7) (Homo sapiens (Human)).